We begin with the raw amino-acid sequence, 269 residues long: Shikimate dehydrogenase (NADP(+)) (269 aa).

Shikimate-binding positions include 22–24 and T68; that span reads TLS. The Proton acceptor role is filled by K72. 2 residues coordinate shikimate: N93 and D104. NADP(+) contacts are provided by residues 128-132, 152-157, and F210; these read GAGGA and NRTNLR. Y212 is a shikimate binding site. G233 contributes to the NADP(+) binding site.

The protein belongs to the shikimate dehydrogenase family. In terms of assembly, homodimer.

It catalyses the reaction shikimate + NADP(+) = 3-dehydroshikimate + NADPH + H(+). It participates in metabolic intermediate biosynthesis; chorismate biosynthesis; chorismate from D-erythrose 4-phosphate and phosphoenolpyruvate: step 4/7. Its function is as follows. Involved in the biosynthesis of the chorismate, which leads to the biosynthesis of aromatic amino acids. Catalyzes the reversible NADPH linked reduction of 3-dehydroshikimate (DHSA) to yield shikimate (SA). The protein is Shikimate dehydrogenase (NADP(+)) of Saccharolobus islandicus (strain L.S.2.15 / Lassen #1) (Sulfolobus islandicus).